A 250-amino-acid polypeptide reads, in one-letter code: DNA polymerase sliding clamp (250 aa).

It belongs to the PCNA family. As to quaternary structure, homotrimer. The subunits circularize to form a toroid; DNA passes through its center. Replication factor C (RFC) is required to load the toroid on the DNA.

Functionally, sliding clamp subunit that acts as a moving platform for DNA processing. Responsible for tethering the catalytic subunit of DNA polymerase and other proteins to DNA during high-speed replication. The protein is DNA polymerase sliding clamp of Methanococcus maripaludis (strain DSM 14266 / JCM 13030 / NBRC 101832 / S2 / LL).